A 277-amino-acid chain; its full sequence is Putative phosphoenolpyruvate synthase regulatory protein (277 aa).

157 to 164 is an ADP binding site; that stretch reads GVSRCGKT.

The protein belongs to the pyruvate, phosphate/water dikinase regulatory protein family. PSRP subfamily.

It catalyses the reaction [pyruvate, water dikinase] + ADP = [pyruvate, water dikinase]-phosphate + AMP + H(+). It carries out the reaction [pyruvate, water dikinase]-phosphate + phosphate + H(+) = [pyruvate, water dikinase] + diphosphate. In terms of biological role, bifunctional serine/threonine kinase and phosphorylase involved in the regulation of the phosphoenolpyruvate synthase (PEPS) by catalyzing its phosphorylation/dephosphorylation. The protein is Putative phosphoenolpyruvate synthase regulatory protein of Photobacterium profundum (strain SS9).